The following is an 80-amino-acid chain: Small ribosomal subunit protein bS18 (80 aa).

The protein belongs to the bacterial ribosomal protein bS18 family. As to quaternary structure, part of the 30S ribosomal subunit. Forms a tight heterodimer with protein bS6.

Functionally, binds as a heterodimer with protein bS6 to the central domain of the 16S rRNA, where it helps stabilize the platform of the 30S subunit. The sequence is that of Small ribosomal subunit protein bS18 from Clostridium perfringens (strain ATCC 13124 / DSM 756 / JCM 1290 / NCIMB 6125 / NCTC 8237 / Type A).